Reading from the N-terminus, the 197-residue chain is Imidazoleglycerol-phosphate dehydratase (197 aa).

The protein belongs to the imidazoleglycerol-phosphate dehydratase family.

It is found in the cytoplasm. It carries out the reaction D-erythro-1-(imidazol-4-yl)glycerol 3-phosphate = 3-(imidazol-4-yl)-2-oxopropyl phosphate + H2O. The protein operates within amino-acid biosynthesis; L-histidine biosynthesis; L-histidine from 5-phospho-alpha-D-ribose 1-diphosphate: step 6/9. The protein is Imidazoleglycerol-phosphate dehydratase of Laribacter hongkongensis (strain HLHK9).